The primary structure comprises 153 residues: uncharacterized protein (153 aa).

Positions 1-22 (MKLLKKGTTVLFVMIMAVMLVA) are cleaved as a signal peptide. Residue Cys23 is the site of N-palmitoyl cysteine attachment. Residue Cys23 is the site of S-diacylglycerol cysteine attachment. The tract at residues 121 to 153 (LPGMASTGDVSKGISMKESEKMLKSQGFKEVEK) is disordered. The span at 135–153 (SMKESEKMLKSQGFKEVEK) shows a compositional bias: basic and acidic residues.

The protein to E.coli YehR.

The protein resides in the cell membrane. This is an uncharacterized protein from Listeria innocua serovar 6a (strain ATCC BAA-680 / CLIP 11262).